The primary structure comprises 623 residues: Glutamine--fructose-6-phosphate aminotransferase [isomerizing] (623 aa).

Cysteine 2 functions as the Nucleophile; for GATase activity in the catalytic mechanism. Positions 2-228 (CGIVGYIGQA…NDQVVTITAD (227 aa)) constitute a Glutamine amidotransferase type-2 domain. SIS domains are found at residues 295–435 (IDES…LRGN) and 468–613 (LGRS…VDQP). Residue lysine 618 is the For Fru-6P isomerization activity of the active site.

As to quaternary structure, homodimer.

The protein localises to the cytoplasm. The catalysed reaction is D-fructose 6-phosphate + L-glutamine = D-glucosamine 6-phosphate + L-glutamate. Its function is as follows. Catalyzes the first step in hexosamine metabolism, converting fructose-6P into glucosamine-6P using glutamine as a nitrogen source. The sequence is that of Glutamine--fructose-6-phosphate aminotransferase [isomerizing] from Corynebacterium efficiens (strain DSM 44549 / YS-314 / AJ 12310 / JCM 11189 / NBRC 100395).